We begin with the raw amino-acid sequence, 293 residues long: Formamidopyrimidine-DNA glycosylase (293 aa).

The active-site Schiff-base intermediate with DNA is proline 2. The Proton donor role is filled by glutamate 3. The active-site Proton donor; for beta-elimination activity is the lysine 60. Positions 110, 129, and 174 each coordinate DNA. Residues asparagine 259–lysine 293 form an FPG-type zinc finger. Arginine 283 serves as the catalytic Proton donor; for delta-elimination activity.

This sequence belongs to the FPG family. In terms of assembly, monomer. The cofactor is Zn(2+).

It carries out the reaction Hydrolysis of DNA containing ring-opened 7-methylguanine residues, releasing 2,6-diamino-4-hydroxy-5-(N-methyl)formamidopyrimidine.. The enzyme catalyses 2'-deoxyribonucleotide-(2'-deoxyribose 5'-phosphate)-2'-deoxyribonucleotide-DNA = a 3'-end 2'-deoxyribonucleotide-(2,3-dehydro-2,3-deoxyribose 5'-phosphate)-DNA + a 5'-end 5'-phospho-2'-deoxyribonucleoside-DNA + H(+). Functionally, involved in base excision repair of DNA damaged by oxidation or by mutagenic agents. Acts as a DNA glycosylase that recognizes and removes damaged bases. Has a preference for oxidized purines, such as 7,8-dihydro-8-oxoguanine (8-oxoG). Has AP (apurinic/apyrimidinic) lyase activity and introduces nicks in the DNA strand. Cleaves the DNA backbone by beta-delta elimination to generate a single-strand break at the site of the removed base with both 3'- and 5'-phosphates. The chain is Formamidopyrimidine-DNA glycosylase from Prochlorococcus marinus (strain MIT 9515).